A 264-amino-acid chain; its full sequence is Thiazole synthase (264 aa).

The Schiff-base intermediate with DXP role is filled by lysine 106. 1-deoxy-D-xylulose 5-phosphate contacts are provided by residues glycine 167, 193 to 194 (AG), and 215 to 216 (NT).

It belongs to the ThiG family. Homotetramer. Forms heterodimers with either ThiH or ThiS.

Its subcellular location is the cytoplasm. It carries out the reaction [ThiS sulfur-carrier protein]-C-terminal-Gly-aminoethanethioate + 2-iminoacetate + 1-deoxy-D-xylulose 5-phosphate = [ThiS sulfur-carrier protein]-C-terminal Gly-Gly + 2-[(2R,5Z)-2-carboxy-4-methylthiazol-5(2H)-ylidene]ethyl phosphate + 2 H2O + H(+). It functions in the pathway cofactor biosynthesis; thiamine diphosphate biosynthesis. Catalyzes the rearrangement of 1-deoxy-D-xylulose 5-phosphate (DXP) to produce the thiazole phosphate moiety of thiamine. Sulfur is provided by the thiocarboxylate moiety of the carrier protein ThiS. In vitro, sulfur can be provided by H(2)S. This chain is Thiazole synthase, found in Xylella fastidiosa (strain 9a5c).